Reading from the N-terminus, the 437-residue chain is Glucose-1-phosphate adenylyltransferase (437 aa).

Alpha-D-glucose 1-phosphate contacts are provided by residues Tyr-113, Gly-179, 194–195, and Ser-212; that span reads EK.

This sequence belongs to the bacterial/plant glucose-1-phosphate adenylyltransferase family. As to quaternary structure, homotetramer.

It catalyses the reaction alpha-D-glucose 1-phosphate + ATP + H(+) = ADP-alpha-D-glucose + diphosphate. It functions in the pathway glycan biosynthesis; glycogen biosynthesis. Its function is as follows. Involved in the biosynthesis of ADP-glucose, a building block required for the elongation reactions to produce glycogen. Catalyzes the reaction between ATP and alpha-D-glucose 1-phosphate (G1P) to produce pyrophosphate and ADP-Glc. This chain is Glucose-1-phosphate adenylyltransferase, found in Haemophilus influenzae (strain ATCC 51907 / DSM 11121 / KW20 / Rd).